A 229-amino-acid chain; its full sequence is Tubulin-specific chaperone B (229 aa).

Positions 170 to 212 (GATKFKEGVWVGVKYDEPVGKNDGSVAGVRYFDCDPKYGGFVR) constitute a CAP-Gly domain.

It belongs to the TBCB family. In terms of assembly, supercomplex made of cofactors A to E. Cofactors A and D function by capturing and stabilizing tubulin in a quasi-native conformation. Cofactor E binds to the cofactor D-tubulin complex; interaction with cofactor C then causes the release of tubulin polypeptides that are committed to the native state.

It is found in the cytoplasm. The protein resides in the cytoskeleton. In terms of biological role, binds to alpha-tubulin folding intermediates after their interaction with cytosolic chaperonin in the pathway leading from newly synthesized tubulin to properly folded heterodimer. The sequence is that of Tubulin-specific chaperone B from Caenorhabditis elegans.